A 122-amino-acid polypeptide reads, in one-letter code: Putative iron-sulfur cluster insertion protein ErpA (122 aa).

3 residues coordinate iron-sulfur cluster: C50, C114, and C116.

Belongs to the HesB/IscA family. Homodimer. Iron-sulfur cluster serves as cofactor.

Required for insertion of 4Fe-4S clusters. This chain is Putative iron-sulfur cluster insertion protein ErpA, found in Burkholderia mallei (strain NCTC 10247).